Reading from the N-terminus, the 258-residue chain is Imidazole glycerol phosphate synthase subunit HisF (258 aa).

Active-site residues include Asp-11 and Asp-130.

This sequence belongs to the HisA/HisF family. Heterodimer of HisH and HisF.

Its subcellular location is the cytoplasm. It catalyses the reaction 5-[(5-phospho-1-deoxy-D-ribulos-1-ylimino)methylamino]-1-(5-phospho-beta-D-ribosyl)imidazole-4-carboxamide + L-glutamine = D-erythro-1-(imidazol-4-yl)glycerol 3-phosphate + 5-amino-1-(5-phospho-beta-D-ribosyl)imidazole-4-carboxamide + L-glutamate + H(+). Its pathway is amino-acid biosynthesis; L-histidine biosynthesis; L-histidine from 5-phospho-alpha-D-ribose 1-diphosphate: step 5/9. IGPS catalyzes the conversion of PRFAR and glutamine to IGP, AICAR and glutamate. The HisF subunit catalyzes the cyclization activity that produces IGP and AICAR from PRFAR using the ammonia provided by the HisH subunit. This chain is Imidazole glycerol phosphate synthase subunit HisF, found in Baumannia cicadellinicola subsp. Homalodisca coagulata.